The primary structure comprises 564 residues: Keratin, type II cytoskeletal 6B (564 aa).

The span at 1-11 shows a compositional bias: low complexity; the sequence is MASTSTTIRSH. The segment at 1–23 is disordered; that stretch reads MASTSTTIRSHSSSRRGFSANSA. At A2 the chain carries N-acetylalanine. Positions 2–162 are head; sequence ASTSTTIRSH…DPAIQRVRAE (161 aa). Positions 163-198 are coil 1A; that stretch reads EREQIKTLNNKFASFIDKVRFLEQQNKVLDTKWTLL. The IF rod domain maps to 163-476; it reads EREQIKTLNN…KLLEGEECRL (314 aa). A linker 1 region spans residues 199–217; that stretch reads QEQGTKTVRQNLEPLFEQY. The segment at 218–309 is coil 1B; that stretch reads INNLRRQLDN…ALYDAELSQM (92 aa). The interval 310–333 is linker 12; that stretch reads QTHISDTSVVLSMDNNRNLDLDSI. The tract at residues 334–472 is coil 2; it reads IAEVKAQYEE…ATYRKLLEGE (139 aa). Residues 473 to 564 are tail; that stretch reads ECRLNGEGVG…SSSSRKSYKH (92 aa). The interval 533-564 is disordered; it reads RATGGGLSSVGGGSSTIKYTTTSSSSRKSYKH. A compositionally biased stretch (gly residues) spans 534–546; it reads ATGGGLSSVGGGS. The span at 547–564 shows a compositional bias: low complexity; that stretch reads STIKYTTTSSSSRKSYKH.

Belongs to the intermediate filament family. In terms of assembly, heterodimer of a type I and a type II keratin. KRT6 isomers associate with KRT16 and/or KRT17. In terms of tissue distribution, constitutively expressed in distinct types of epithelia such as those in oral mucosa, esophagus, papillae of tongue and hair follicle outer root sheath.

The protein is Keratin, type II cytoskeletal 6B (KRT6B) of Homo sapiens (Human).